The sequence spans 1161 residues: DNA-directed RNA polymerase subunit beta (1161 aa).

This sequence belongs to the RNA polymerase beta chain family. As to quaternary structure, the RNAP catalytic core consists of 2 alpha, 1 beta, 1 beta' and 1 omega subunit. When a sigma factor is associated with the core the holoenzyme is formed, which can initiate transcription.

It carries out the reaction RNA(n) + a ribonucleoside 5'-triphosphate = RNA(n+1) + diphosphate. In terms of biological role, DNA-dependent RNA polymerase catalyzes the transcription of DNA into RNA using the four ribonucleoside triphosphates as substrates. The polypeptide is DNA-directed RNA polymerase subunit beta (Streptomyces avermitilis (strain ATCC 31267 / DSM 46492 / JCM 5070 / NBRC 14893 / NCIMB 12804 / NRRL 8165 / MA-4680)).